We begin with the raw amino-acid sequence, 1890 residues long: Putative aminopeptidase-2 (1890 aa).

The first 20 residues, 1–20 (MRRKLLLLLCFIGLFSLIST), serve as a signal peptide directing secretion. N-linked (GlcNAc...) asparagine glycosylation is present at Asn-110. Residues Glu-220 and 354–358 (GAMEN) each bind substrate. A Zn(2+)-binding site is contributed by His-390. Glu-391 serves as the catalytic Proton acceptor. The Zn(2+) site is built by His-394 and Glu-413. N-linked (GlcNAc...) asparagine glycosylation is found at Asn-534, Asn-581, Asn-785, Asn-803, Asn-914, Asn-1024, and Asn-1094. Glu-1143 is a substrate binding site. A glycan (N-linked (GlcNAc...) asparagine) is linked at Asn-1245. Residue 1280-1284 (GAMEN) coordinates substrate. His-1316 lines the Zn(2+) pocket. Glu-1317 functions as the Proton acceptor in the catalytic mechanism. His-1320 and Glu-1339 together coordinate Zn(2+). Asn-1451, Asn-1521, Asn-1826, and Asn-1841 each carry an N-linked (GlcNAc...) asparagine glycan.

This sequence belongs to the peptidase M1 family. Zn(2+) is required as a cofactor.

Its function is as follows. Putative aminopeptidase which plays a role in oocyte maturation. This is Putative aminopeptidase-2 from Caenorhabditis elegans.